The following is a 199-amino-acid chain: dTTP/UTP pyrophosphatase (199 aa).

Asp79 functions as the Proton acceptor in the catalytic mechanism.

The protein belongs to the Maf family. YhdE subfamily. Requires a divalent metal cation as cofactor.

Its subcellular location is the cytoplasm. The enzyme catalyses dTTP + H2O = dTMP + diphosphate + H(+). The catalysed reaction is UTP + H2O = UMP + diphosphate + H(+). Nucleoside triphosphate pyrophosphatase that hydrolyzes dTTP and UTP. May have a dual role in cell division arrest and in preventing the incorporation of modified nucleotides into cellular nucleic acids. The polypeptide is dTTP/UTP pyrophosphatase (Porphyromonas gingivalis (strain ATCC 33277 / DSM 20709 / CIP 103683 / JCM 12257 / NCTC 11834 / 2561)).